The following is a 20-amino-acid chain: Short cationic peptide-4c (20 aa).

E20 carries the glutamic acid 1-amide modification.

Expressed by the venom gland.

It localises to the secreted. This Cupiennius salei (American wandering spider) protein is Short cationic peptide-4c.